A 179-amino-acid polypeptide reads, in one-letter code: Auxin-induced protein IAA6 (179 aa).

An EAR-like (transcriptional repression) motif is present at residues 13–17 (LRLGL). A disordered region spans residues 31-52 (FSEIDGGVEENGGSGDRKSVDK). In terms of domain architecture, PB1 spans 75–163 (KMYMKVSMDG…KRLRIMKRSD (89 aa)).

Belongs to the Aux/IAA family. As to quaternary structure, homodimers and heterodimers.

It is found in the nucleus. Functionally, aux/IAA proteins are short-lived transcriptional factors that function as repressors of early auxin response genes at low auxin concentrations. Repression is thought to result from the interaction with auxin response factors (ARFs), proteins that bind to the auxin-responsive promoter element (AuxRE). Formation of heterodimers with ARF proteins may alter their ability to modulate early auxin response genes expression. The sequence is that of Auxin-induced protein IAA6 (IAA6) from Pisum sativum (Garden pea).